The chain runs to 126 residues: Large ribosomal subunit protein bL12 (126 aa).

It belongs to the bacterial ribosomal protein bL12 family. In terms of assembly, homodimer. Part of the ribosomal stalk of the 50S ribosomal subunit. Forms a multimeric L10(L12)X complex, where L10 forms an elongated spine to which 2 to 4 L12 dimers bind in a sequential fashion. Binds GTP-bound translation factors.

Its function is as follows. Forms part of the ribosomal stalk which helps the ribosome interact with GTP-bound translation factors. Is thus essential for accurate translation. The chain is Large ribosomal subunit protein bL12 from Methylocella silvestris (strain DSM 15510 / CIP 108128 / LMG 27833 / NCIMB 13906 / BL2).